Reading from the N-terminus, the 287-residue chain is ATP synthase gamma chain (287 aa).

Belongs to the ATPase gamma chain family. As to quaternary structure, F-type ATPases have 2 components, CF(1) - the catalytic core - and CF(0) - the membrane proton channel. CF(1) has five subunits: alpha(3), beta(3), gamma(1), delta(1), epsilon(1). CF(0) has three main subunits: a, b and c.

It localises to the cell inner membrane. Produces ATP from ADP in the presence of a proton gradient across the membrane. The gamma chain is believed to be important in regulating ATPase activity and the flow of protons through the CF(0) complex. The protein is ATP synthase gamma chain of Azotobacter vinelandii (strain DJ / ATCC BAA-1303).